A 351-amino-acid polypeptide reads, in one-letter code: Lipopolysaccharide core biosynthesis mannosyltransferase LpsB (351 aa).

This sequence belongs to the glycosyltransferase group 1 family. Glycosyltransferase 4 subfamily.

The protein operates within bacterial outer membrane biogenesis; LPS core biosynthesis. Its function is as follows. Acts at transfer of mannose group to a 3-deoxy-D-mono octulonic acid (KDO) via an alpha-1,5 linkage. The protein is Lipopolysaccharide core biosynthesis mannosyltransferase LpsB (lpsB) of Rhizobium meliloti (strain 1021) (Ensifer meliloti).